A 202-amino-acid polypeptide reads, in one-letter code: Peptidyl-tRNA hydrolase (202 aa).

Tyrosine 19 is a binding site for tRNA. Histidine 24 acts as the Proton acceptor in catalysis. TRNA-binding residues include tyrosine 70, asparagine 72, and asparagine 118.

This sequence belongs to the PTH family. As to quaternary structure, monomer.

It is found in the cytoplasm. The enzyme catalyses an N-acyl-L-alpha-aminoacyl-tRNA + H2O = an N-acyl-L-amino acid + a tRNA + H(+). Functionally, hydrolyzes ribosome-free peptidyl-tRNAs (with 1 or more amino acids incorporated), which drop off the ribosome during protein synthesis, or as a result of ribosome stalling. In terms of biological role, catalyzes the release of premature peptidyl moieties from peptidyl-tRNA molecules trapped in stalled 50S ribosomal subunits, and thus maintains levels of free tRNAs and 50S ribosomes. This is Peptidyl-tRNA hydrolase from Prochlorococcus marinus (strain NATL2A).